Here is a 562-residue protein sequence, read N- to C-terminus: Arginine--tRNA ligase (562 aa).

The 'HIGH' region signature appears at 121-131 (PNIAKPMGMGH).

This sequence belongs to the class-I aminoacyl-tRNA synthetase family. Monomer.

It localises to the cytoplasm. It carries out the reaction tRNA(Arg) + L-arginine + ATP = L-arginyl-tRNA(Arg) + AMP + diphosphate. The chain is Arginine--tRNA ligase from Limosilactobacillus reuteri (strain DSM 20016) (Lactobacillus reuteri).